A 37-amino-acid chain; its full sequence is Large ribosomal subunit protein bL36c (37 aa).

This sequence belongs to the bacterial ribosomal protein bL36 family.

The protein localises to the plastid. Its subcellular location is the chloroplast. This Cycas taitungensis (Prince sago) protein is Large ribosomal subunit protein bL36c.